A 160-amino-acid chain; its full sequence is Suppressyn (160 aa).

The N-terminal stretch at 1 to 39 (MACIYPTTFYTSLPTKSLNMGISLTTILILSVAVLLSTA) is a signal peptide. The segment at 137 to 160 (AKASKPTTPPENRPRHFHSFIQKL) is disordered.

In terms of assembly, interacts (secreted) with SLC1A5; mainly at cell surface. In terms of tissue distribution, specifically expressed in placenta by extravillous trophoblasts and syncytiotrophoblasts (at protein level).

Its subcellular location is the secreted. In terms of biological role, may play a role in trophoblasts syncytialization, the spontaneous fusion of their plasma membranes, an essential process in placental development. May negatively regulate cell-cell fusion by interacting with SLC1A5, the probable receptor on the cell surface of the fusogenic syncytin-1/ERVW-1. The protein is Suppressyn (ERVH48-1) of Homo sapiens (Human).